Reading from the N-terminus, the 307-residue chain is Potassium channel subfamily K member 7 (307 aa).

Residues M1–Y10 lie on the Cytoplasmic side of the membrane. The chain crosses the membrane as a helical span at residues L11–L31. The N-linked (GlcNAc...) asparagine glycan is linked to N83. The segment at residues L92–G118 is an intramembrane region (pore-forming). Residues A120–L140 form a helical membrane-spanning segment. Residues R141–A172 lie on the Cytoplasmic side of the membrane. A helical transmembrane segment spans residues G173–V193. The segment at residues L199–H227 is an intramembrane region (pore-forming). Residues L233–V253 traverse the membrane as a helical segment. The Cytoplasmic segment spans residues E254–A307.

The protein belongs to the two pore domain potassium channel (TC 1.A.1.8) family. Homodimer. In terms of tissue distribution, detected in embryo, eye, lung and liver. Weakly expressed in colon, testis, atria, kidney, intestine, bladder, uterus, ovary, salivary gland, thymus and brain stem. Not detected in brain, cerebellum, spinal cord, heart, ventricle, skeletal muscle, liver, placenta and pancreas. In the eye, highly expressed in the retinal ganglion cell layer and inner nuclear layer.

The protein resides in the membrane. Probable potassium channel subunit. No channel activity observed in vitro as protein remains in the endoplasmic reticulum. May need to associate with an as yet unknown partner in order to reach the plasma membrane. This chain is Potassium channel subfamily K member 7 (Kcnk7), found in Mus musculus (Mouse).